We begin with the raw amino-acid sequence, 443 residues long: Glutamate--tRNA ligase 1 (443 aa).

A 'HIGH' region motif is present at residues 9-19 (PSPTGYLHVGN). A 'KMSKS' region motif is present at residues 238-242 (KISKR). ATP is bound at residue Lys241.

This sequence belongs to the class-I aminoacyl-tRNA synthetase family. Glutamate--tRNA ligase type 1 subfamily. In terms of assembly, monomer.

It is found in the cytoplasm. It carries out the reaction tRNA(Glu) + L-glutamate + ATP = L-glutamyl-tRNA(Glu) + AMP + diphosphate. Its function is as follows. Catalyzes the attachment of glutamate to tRNA(Glu) in a two-step reaction: glutamate is first activated by ATP to form Glu-AMP and then transferred to the acceptor end of tRNA(Glu). In Ehrlichia ruminantium (strain Welgevonden), this protein is Glutamate--tRNA ligase 1.